A 247-amino-acid chain; its full sequence is Cell division protein ZapD (247 aa).

The protein belongs to the ZapD family. Interacts with FtsZ.

The protein localises to the cytoplasm. Functionally, cell division factor that enhances FtsZ-ring assembly. Directly interacts with FtsZ and promotes bundling of FtsZ protofilaments, with a reduction in FtsZ GTPase activity. This Escherichia coli O7:K1 (strain IAI39 / ExPEC) protein is Cell division protein ZapD.